Consider the following 337-residue polypeptide: uncharacterized protein (337 aa).

Positions 291 to 314 are disordered; it reads NKTRQCSNTKTTTKSTMTPINNGF. A compositionally biased stretch (low complexity) spans 299–308; that stretch reads TKTTTKSTMT.

This is an uncharacterized protein from Acanthamoeba polyphaga mimivirus (APMV).